Reading from the N-terminus, the 554-residue chain is Solute carrier family 22 member 1 (554 aa).

Residues 1 to 24 are Cytoplasmic-facing; the sequence is MPSVDDVLEQVGEFGWFQKQAFLN. A helical transmembrane segment spans residues 25-45; it reads LCLTSVAFAPIYVGIVFLGFT. The Extracellular portion of the chain corresponds to 46-234; that stretch reads PDHRCRSPGV…EFVGLGYRKT (189 aa). N-linked (GlcNAc...) asparagine glycosylation is present at Asn71. Residues 235–255 traverse the membrane as a helical segment; the sequence is VAILYQTAFSVGLVLLSGLAY. Residues 256–261 lie on the Cytoplasmic side of the membrane; sequence AVPHWR. Residues 262-282 form a helical membrane-spanning segment; it reads SLQLAVSLPIFLLLLCYWFVP. The Proline-rich sequence signature appears at 282–286; it reads PESPR. The Extracellular portion of the chain corresponds to 283 to 347; that stretch reads ESPRWLLSQK…FRTQNLRKYT (65 aa). Ser333 is modified (phosphoserine). A helical membrane pass occupies residues 348-368; it reads FILMYLWFTSSVLYQGLIMHV. The Cytoplasmic segment spans residues 369–376; it reads GATGGSLY. A helical membrane pass occupies residues 377 to 397; it reads LDFLYSALVEFPAAFVILLII. Residues 398-402 are Extracellular-facing; sequence DRFGR. Residues 403-423 form a helical membrane-spanning segment; sequence LYLLAGSNLLAGAACFFMIFI. Residues 424–431 lie on the Cytoplasmic side of the membrane; it reads SHDLHWLS. A helical transmembrane segment spans residues 432–452; it reads IVAACIGRMGITIVFQMVCLV. Topologically, residues 453–464 are extracellular; the sequence is SAELYPTFIRNL. The helical transmembrane segment at 465 to 485 threads the bilayer; sequence GVMVCSSLCDLGGVVAPFLVF. At 486–492 the chain is on the cytoplasmic side; that stretch reads RLTEVWR. The helical transmembrane segment at 493 to 513 threads the bilayer; the sequence is GLPLVLFAALGLVAGGMSLLL. The Extracellular portion of the chain corresponds to 514 to 554; that stretch reads PETKGVALPETIEEVERLGRKAKPRDNMIYLQVKMPEPAGL.

The protein belongs to the major facilitator (TC 2.A.1) superfamily. Organic cation transporter (TC 2.A.1.19) family. In terms of processing, phosphorylated.

It is found in the basolateral cell membrane. The protein localises to the apical cell membrane. The protein resides in the lateral cell membrane. Its subcellular location is the basal cell membrane. It localises to the cell membrane. It catalyses the reaction 1-methylnicotinamide(out) = 1-methylnicotinamide(in). The enzyme catalyses dopamine(out) = dopamine(in). The catalysed reaction is serotonin(out) = serotonin(in). It carries out the reaction (R)-adrenaline(out) = (R)-adrenaline(in). It catalyses the reaction (R)-noradrenaline(out) = (R)-noradrenaline(in). The enzyme catalyses histamine(out) = histamine(in). The catalysed reaction is guanidine(out) = guanidine(in). It carries out the reaction choline(out) = choline(in). It catalyses the reaction acetylcholine(in) = acetylcholine(out). The enzyme catalyses thiamine(in) = thiamine(out). The catalysed reaction is spermidine(in) = spermidine(out). It carries out the reaction agmatine(out) = agmatine(in). It catalyses the reaction putrescine(out) = putrescine(in). The enzyme catalyses (R)-carnitine(in) = (R)-carnitine(out). The catalysed reaction is O-isobutanoyl-(R)-carnitine(in) = O-isobutanoyl-(R)-carnitine(out). It carries out the reaction O-acetyl-(R)-carnitine(in) = O-acetyl-(R)-carnitine(out). It catalyses the reaction O-3-hydroxybutanoyl-(R)-carnitine(in) = O-3-hydroxybutanoyl-(R)-carnitine(out). The enzyme catalyses O-propanoyl-(R)-carnitine(in) = O-propanoyl-(R)-carnitine(out). The catalysed reaction is O-butanoyl-(R)-carnitine(in) = O-butanoyl-(R)-carnitine(out). It carries out the reaction O-2-methylbutanoyl-(R)-carnitine(in) = O-2-methylbutanoyl-(R)-carnitine(out). It catalyses the reaction O-3-methylbutanoyl-(R)-carnitine(in) = O-3-methylbutanoyl-(R)-carnitine(out). The enzyme catalyses O-hexanoyl-(R)-carnitine(in) = O-hexanoyl-(R)-carnitine(out). The catalysed reaction is L-histidyl-L-proline diketopiperazine(in) = L-histidyl-L-proline diketopiperazine(out). It carries out the reaction (R)-salsolinol(in) = (R)-salsolinol(out). It catalyses the reaction prostaglandin F2alpha(out) = prostaglandin F2alpha(in). The enzyme catalyses prostaglandin E2(out) = prostaglandin E2(in). Its activity is regulated as follows. Phosphorylation of the transporter leads to changes in its substrate affinity, resulting in a regulation of the transport activity. In contrast with rat ortholog, ASP uptake is inhibited by protein kinase A (PKA) and C (PKC) activation. ASP uptake is also endogenously activated by calmodulin, the calmodulin-dependent kinase II and LCK tyrosine kinase. Inhibited by cGMP, most likely through a cGMP-binding protein that interacts with OCT1. In terms of biological role, electrogenic voltage-dependent transporter that mediates the transport of a variety of organic cations such as endogenous bioactive amines, cationic drugs and xenobiotics. Functions as a pH- and Na(+)-independent, bidirectional transporter. Cation cellular uptake or release is driven by the electrochemical potential (i.e. membrane potential and concentration gradient) and substrate selectivity. Hydrophobicity is a major requirement for recognition in polyvalent substrates and inhibitors. Primarily expressed in the basolateral membrane of hepatocytes and proximal tubules and involved in the uptake and disposition of cationic compounds from the blood by hepatic and renal clearance. Most likely functions as an uptake carrier in enterocytes contributing to the intestinal elimination of organic cations from the systemic circulation. Transports endogenous monoamines such as N-1-methylnicotinamide (NMN), guanidine, neurotransmitters dopamine, serotonin, noradrenaline, adrenaline and histamine, and quaternary ammonium compound such as choline. Also transports natural polyamines such as spermidine, agmatine and putrescine at low affinity, but relatively high turnover. Involved in the hepatic and intestinal uptake of the vitamin B1/thiamine, hence regulating hepatic lipid and energy metabolism. Contributes to the influx and efflux of fatty acid carriers carnitines and acylcarnitines across the basolateral membrane of hepatocytes, from the liver to the systemic circulation and inversely and may be involved in regulating the systemic availability of hepatic acylcarnitines. Also capable of transporting non-amine endogenous compounds such as prostaglandin E2 (PGE2) and prostaglandin F2-alpha (PGF2-alpha). May contribute to the transport of cationic compounds in testes across the blood-testis-barrier. Also mediates the uptake of xenobiotics tributylmethylammonium (TBuMA), quinidine, N-methyl-quinine (NMQ), N-methyl-quinidine (NMQD) N-(4,4-azo-n-pentyl)-quinuclidine (APQ), azidoprocainamide methoiodide (AMP), N-(4,4-azo-n-pentyl)-21-deoxyajmalinium (APDA) and 4-(4-(dimethylamino)styryl)-N-methylpyridinium (ASP). The polypeptide is Solute carrier family 22 member 1 (SLC22A1) (Sus scrofa (Pig)).